We begin with the raw amino-acid sequence, 571 residues long: Sulfite reductase [NADPH] hemoprotein beta-component (571 aa).

C436, C442, C481, and C485 together coordinate [4Fe-4S] cluster. Siroheme is bound at residue C485.

The protein belongs to the nitrite and sulfite reductase 4Fe-4S domain family. In terms of assembly, alpha(8)-beta(8). The alpha component is a flavoprotein, the beta component is a hemoprotein. Requires siroheme as cofactor. It depends on [4Fe-4S] cluster as a cofactor.

The enzyme catalyses hydrogen sulfide + 3 NADP(+) + 3 H2O = sulfite + 3 NADPH + 4 H(+). Its pathway is sulfur metabolism; hydrogen sulfide biosynthesis; hydrogen sulfide from sulfite (NADPH route): step 1/1. Its function is as follows. Component of the sulfite reductase complex that catalyzes the 6-electron reduction of sulfite to sulfide. This is one of several activities required for the biosynthesis of L-cysteine from sulfate. The sequence is that of Sulfite reductase [NADPH] hemoprotein beta-component from Anoxybacillus flavithermus (strain DSM 21510 / WK1).